Reading from the N-terminus, the 470-residue chain is MSQNFGKISQVIGAVIDVEFEPGKLPPIYQALRVTNPAIDDQEFNLVLEVAQHLGENAVRTIAMDSTDGLVRGQQVKDMGKQISVPVGKKTLGRILNVIGEPVDEMGPIGNEKEYGIHREAPLFVNQSTKVEAFTTGIKVVDLLAPYARGGKIGLFGGAGVGKTVLIMELINNIAKQHGGFSVFAGVGERTREGNDLWMEMKESGVLDKAALVYGQMNEPPGARARVALSALSIAEYFRDEEGQDVLLFVDNIFRFTQAGSEVSALLGRIPSAVGYQPTLATEMGELQERITSTNKGSITSVQAIYVPADDLTDPAPATAFAHLDATTVLSRQIAELGIYPAVDPLDSTSRILDPQVIGDEHYAIARQVQYVLQKYKDLQDIIAILGMDELSEEDKLVVARARKIQKFLSQPFHVAEAFTGSPGKYVELKDTIKGFSEIIAGKHDDLPEQAFYMVGTIEEAIEKAQKLAV.

G157–T164 provides a ligand contact to ATP.

Belongs to the ATPase alpha/beta chains family. As to quaternary structure, F-type ATPases have 2 components, CF(1) - the catalytic core - and CF(0) - the membrane proton channel. CF(1) has five subunits: alpha(3), beta(3), gamma(1), delta(1), epsilon(1). CF(0) has three main subunits: a(1), b(2) and c(9-12). The alpha and beta chains form an alternating ring which encloses part of the gamma chain. CF(1) is attached to CF(0) by a central stalk formed by the gamma and epsilon chains, while a peripheral stalk is formed by the delta and b chains.

Its subcellular location is the cell inner membrane. The enzyme catalyses ATP + H2O + 4 H(+)(in) = ADP + phosphate + 5 H(+)(out). Produces ATP from ADP in the presence of a proton gradient across the membrane. The catalytic sites are hosted primarily by the beta subunits. This Citrifermentans bemidjiense (strain ATCC BAA-1014 / DSM 16622 / JCM 12645 / Bem) (Geobacter bemidjiensis) protein is ATP synthase subunit beta.